Consider the following 392-residue polypeptide: MLLDSRFPTDYYLRILELAIRDSSCKLVYNRRIRMLETLPLDQKLSADQEEESSILREVISELLVHSGESYAISARLLAVIDIYLKQEQPSNSLFARIFRKKERVRKRQIIDKLLLLKSILFFERQRPVKKVASVADSILRKSKGNFSSWEDFTHDVQSQKSGTEEEVPDSLRGRVEEDAASQMIVEVLLSFLDNQDMYLSVSFEILRNFLEEKVLSKRSLSPRSHDAVKKMKDLYLVSPEDFQTFVGGVITESLFQEEDQLVVGCVIFSQEGQELFDSWKGITKKYPHDMLYTQAFLAEVVLHVVQHHIHLNAKVKPTSPEQVGSLYSIRDHSPRAWARMMRVLLMRWLLDYHFDVYAHLKEEILRCPPRPPFWQMIPSESGDGTFHREAR.

Belongs to the chlamydial CPn_0675/CT_696/TC_0068 family.

This is an uncharacterized protein from Chlamydia muridarum (strain MoPn / Nigg).